The following is a 748-amino-acid chain: 5-methyltetrahydropteroyltriglutamate--homocysteine methyltransferase (748 aa).

Residues 18-21 and lysine 112 each bind 5-methyltetrahydropteroyltri-L-glutamate; that span reads REWK. L-homocysteine-binding positions include 420–422 and glutamate 473; that span reads IGS. Residues 420 to 422 and glutamate 473 each bind L-methionine; that span reads IGS. Tryptophan 550 serves as a coordination point for 5-methyltetrahydropteroyltri-L-glutamate. Aspartate 588 contributes to the L-homocysteine binding site. Aspartate 588 serves as a coordination point for L-methionine. Glutamate 594 provides a ligand contact to 5-methyltetrahydropteroyltri-L-glutamate. Zn(2+)-binding residues include histidine 630, cysteine 632, and glutamate 654. Catalysis depends on histidine 683, which acts as the Proton donor. Cysteine 715 contributes to the Zn(2+) binding site.

Belongs to the vitamin-B12 independent methionine synthase family. Zn(2+) is required as a cofactor.

It catalyses the reaction 5-methyltetrahydropteroyltri-L-glutamate + L-homocysteine = tetrahydropteroyltri-L-glutamate + L-methionine. It functions in the pathway amino-acid biosynthesis; L-methionine biosynthesis via de novo pathway; L-methionine from L-homocysteine (MetE route): step 1/1. Catalyzes the transfer of a methyl group from 5-methyltetrahydrofolate to homocysteine resulting in methionine formation. The sequence is that of 5-methyltetrahydropteroyltriglutamate--homocysteine methyltransferase from Staphylococcus epidermidis (strain ATCC 35984 / DSM 28319 / BCRC 17069 / CCUG 31568 / BM 3577 / RP62A).